We begin with the raw amino-acid sequence, 178 residues long: Ribulose bisphosphate carboxylase small subunit, chloroplastic (178 aa).

The transit peptide at 1-55 directs the protein to the chloroplast; the sequence is MASSMMVSTAAVSRTSPAQSNMVVPFAGLHSSAAFPVTRKFADSSKLPSNGLRVR.

Belongs to the RuBisCO small chain family. Heterohexadecamer of 8 large and 8 small subunits.

The protein localises to the plastid. It localises to the chloroplast. In terms of biological role, ruBisCO catalyzes two reactions: the carboxylation of D-ribulose 1,5-bisphosphate, the primary event in carbon dioxide fixation, as well as the oxidative fragmentation of the pentose substrate. Both reactions occur simultaneously and in competition at the same active site. Although the small subunit is not catalytic it is essential for maximal activity. In Zantedeschia aethiopica (White calla lily), this protein is Ribulose bisphosphate carboxylase small subunit, chloroplastic.